A 477-amino-acid chain; its full sequence is ETS translocation variant 1 (477 aa).

Serine 94 carries the post-translational modification Phosphoserine. A disordered region spans residues 128-179; it reads PQVGMRPSNPPTPSSTPVSPLHHASPNTAHTPKPDRAFPAHLPPSQSIPDST. Phosphoserine; by RPS6KA1 and RPS6KA5 occurs at positions 191 and 216. Lysine 317 is covalently cross-linked (Glycyl lysine isopeptide (Lys-Gly) (interchain with G-Cter in SUMO2)). Positions 335-415 form a DNA-binding region, ETS; that stretch reads LQLWQFLVAL…AGERYVYKFV (81 aa).

Belongs to the ETS family. Sumoylated. In terms of processing, phosphorylated at Ser-191 and Ser-216 by RPS6KA1 and RPS6KA5; phosphorylation activates transcriptional activity. In terms of tissue distribution, abundant in kidney. Moderate levels seen in the heart, brain, lung, embryo and lower levels seen in spleen, intestine, testis and thymus.

It localises to the nucleus. Its function is as follows. Transcriptional activator that binds to DNA sequences containing the consensus pentanucleotide 5'-CGGA[AT]-3'. Required for olfactory dopaminergic neuron differentiation; may directly activate expression of tyrosine hydroxylase (TH). The sequence is that of ETS translocation variant 1 from Mus musculus (Mouse).